A 182-amino-acid chain; its full sequence is U1 small nuclear ribonucleoprotein C (182 aa).

The segment at 4–36 adopts a Matrin-type zinc-finger fold; sequence YLCDYCQVWLTHDSQSVRKAHNAGRAHIQNVQD. Residues 129 to 182 form a disordered region; sequence PQTTASSNTQLTQQQQSLPQTNEHQRARTHSNANNHFTKTHHQGQRSHQRFVRA. The segment covering 130 to 150 has biased composition (low complexity); sequence QTTASSNTQLTQQQQSLPQTN. Over residues 166–182 the composition is skewed to basic residues; the sequence is TKTHHQGQRSHQRFVRA.

It belongs to the U1 small nuclear ribonucleoprotein C family. In terms of assembly, U1 snRNP is composed of the 7 core Sm proteins smb1, smd1, smd2, smd3, sme1, smf1 and smg1 (Sm proteins B, D1, D2, D3, E, F and G, respectively) that assemble in a heptameric protein ring on the Sm site of the small nuclear RNA to form the core snRNP, and at least 9 U1 snRNP-specific proteins usp101/U1-70K, usp102/U1-A, usp103/U1-C, usp106/LUC7, usp105/PRP39, usp104/PRP40, usp107/U1-H, usp108/U1-J and usp109/U1-L. usp103/U1-C interacts with U1 snRNA and the 5' splice-site region of the pre-mRNA.

Its subcellular location is the nucleus. Component of the spliceosomal U1 snRNP, which is essential for recognition of the pre-mRNA 5' splice-site and the subsequent assembly of the spliceosome. usp103/U1-C is directly involved in initial 5' splice-site recognition for both constitutive and regulated alternative splicing. The interaction with the 5' splice-site seems to precede base-pairing between the pre-mRNA and the U1 snRNA. Stimulates commitment or early (E) complex formation by stabilizing the base pairing of the 5' end of the U1 snRNA and the 5' splice-site region. This chain is U1 small nuclear ribonucleoprotein C (usp103), found in Schizosaccharomyces pombe (strain 972 / ATCC 24843) (Fission yeast).